The sequence spans 363 residues: DNA replication and repair protein RecF (363 aa).

31–38 (GANSSGKT) provides a ligand contact to ATP.

The protein belongs to the RecF family.

It is found in the cytoplasm. The RecF protein is involved in DNA metabolism; it is required for DNA replication and normal SOS inducibility. RecF binds preferentially to single-stranded, linear DNA. It also seems to bind ATP. The sequence is that of DNA replication and repair protein RecF from Nitrosococcus oceani (strain ATCC 19707 / BCRC 17464 / JCM 30415 / NCIMB 11848 / C-107).